Consider the following 247-residue polypeptide: 5-oxoprolinase subunit A (247 aa).

Belongs to the LamB/PxpA family. Forms a complex composed of PxpA, PxpB and PxpC.

The enzyme catalyses 5-oxo-L-proline + ATP + 2 H2O = L-glutamate + ADP + phosphate + H(+). In terms of biological role, catalyzes the cleavage of 5-oxoproline to form L-glutamate coupled to the hydrolysis of ATP to ADP and inorganic phosphate. The protein is 5-oxoprolinase subunit A of Vibrio vulnificus (strain YJ016).